The sequence spans 272 residues: Putative phosphoenolpyruvate synthase regulatory protein (272 aa).

152-159 (GVSRSGKT) contacts ADP.

This sequence belongs to the pyruvate, phosphate/water dikinase regulatory protein family. PSRP subfamily.

It catalyses the reaction [pyruvate, water dikinase] + ADP = [pyruvate, water dikinase]-phosphate + AMP + H(+). The catalysed reaction is [pyruvate, water dikinase]-phosphate + phosphate + H(+) = [pyruvate, water dikinase] + diphosphate. Its function is as follows. Bifunctional serine/threonine kinase and phosphorylase involved in the regulation of the phosphoenolpyruvate synthase (PEPS) by catalyzing its phosphorylation/dephosphorylation. The sequence is that of Putative phosphoenolpyruvate synthase regulatory protein from Methylibium petroleiphilum (strain ATCC BAA-1232 / LMG 22953 / PM1).